We begin with the raw amino-acid sequence, 675 residues long: Protein REPRESSOR OF VERNALIZATION 1 (675 aa).

Positions M1 to K143 are disordered. The segment covering A22 to A31 has biased composition (low complexity). Positions E48–L70 are enriched in acidic residues. The span at E71 to R86 shows a compositional bias: basic and acidic residues. A Nuclear localization signal motif is present at residues M73 to E80. Over residues T87–K96 the composition is skewed to basic residues. Residues S113–T127 show a composition bias toward acidic residues. The BAH domain occupies N157–T275. Disordered stretches follow at residues E300–T349, G493–T512, and L587–E675. Basic and acidic residues-rich tracts occupy residues V333 to K346, K499 to T512, and K613 to E627. The TFIIS central domain maps to Y372–R518.

As to expression, expressed constitutively.

It is found in the nucleus. Functionally, component of a grass-specific mechanism of vernalization, a process by which prolonged cold exposure provides competence to flower in daylengths longer than 12 hours. Negative regulator of flowering required for vernalization establishment by repressing VRN1 before vernalization and in the fall season. The sequence is that of Protein REPRESSOR OF VERNALIZATION 1 from Brachypodium distachyon (Purple false brome).